A 104-amino-acid chain; its full sequence is Flagellar hook-basal body complex protein FliE (104 aa).

It belongs to the FliE family.

It localises to the bacterial flagellum basal body. This is Flagellar hook-basal body complex protein FliE from Pectobacterium atrosepticum (strain SCRI 1043 / ATCC BAA-672) (Erwinia carotovora subsp. atroseptica).